The chain runs to 105 residues: Ribonuclease P protein component 4 (105 aa).

Zn(2+) contacts are provided by Cys63, Cys66, Cys89, and Cys92.

The protein belongs to the eukaryotic/archaeal RNase P protein component 4 family. Consists of a catalytic RNA component and at least 4-5 protein subunits. Requires Zn(2+) as cofactor.

It localises to the cytoplasm. The catalysed reaction is Endonucleolytic cleavage of RNA, removing 5'-extranucleotides from tRNA precursor.. Part of ribonuclease P, a protein complex that generates mature tRNA molecules by cleaving their 5'-ends. This Methanoculleus marisnigri (strain ATCC 35101 / DSM 1498 / JR1) protein is Ribonuclease P protein component 4.